We begin with the raw amino-acid sequence, 899 residues long: Ewing's tumor-associated antigen 1 homolog (899 aa).

The disordered stretch occupies residues 1–82 (MSRRRKHGDS…TEERYETPKR (82 aa)). Residues 71-81 (SNTEERYETPK) are compositionally biased toward basic and acidic residues. An ATR-activation domain (AAD) motif is present at residues 105 to 111 (IFWDQNS). A coiled-coil region spans residues 180-210 (TKLKSQNQEEELMKLAKQFDKNMEELDVIQE). Residues lysine 416 and lysine 444 each participate in a glycyl lysine isopeptide (Lys-Gly) (interchain with G-Cter in SUMO2) cross-link. Serine 467 bears the Phosphoserine mark. Residues lysine 485 and lysine 539 each participate in a glycyl lysine isopeptide (Lys-Gly) (interchain with G-Cter in SUMO2) cross-link. Positions 607–622 (DDVDDDILYQACDDIE) match the RBM1 motif motif. Phosphoserine is present on serine 810. Residues 833–899 (NKTVNPLPGK…AQASSVKKGR (67 aa)) form a disordered region. Over residues 859–877 (PSKEEEEKNRKCSPEEIQR) the composition is skewed to basic and acidic residues. The short motif at 868 to 890 (RKCSPEEIQRKRQAALIRRMAKA) is the RBM2 motif element.

Interacts (via RBM1 motif) with RPA1. Interacts (via RBM2 motif) with RPA2. Interacts (via the ATR-activation domain motif) with ATR. Phosphorylated by ATR.

It localises to the nucleus. In terms of biological role, replication stress response protein that accumulates at DNA damage sites and promotes replication fork progression and integrity. Recruited to stalled replication forks via interaction with the RPA complex and directly stimulates ATR kinase activity independently of TOPBP1. Probably only regulates a subset of ATR targets. The chain is Ewing's tumor-associated antigen 1 homolog from Bos taurus (Bovine).